Consider the following 372-residue polypeptide: Alanine dehydrogenase 1 (372 aa).

The active site involves His94. 170 to 200 (TYVIFGGGVAATNAANVALGLNAKVIIIELN) is a binding site for NAD(+).

The protein belongs to the AlaDH/PNT family.

It carries out the reaction L-alanine + NAD(+) + H2O = pyruvate + NH4(+) + NADH + H(+). The protein operates within amino-acid degradation; L-alanine degradation via dehydrogenase pathway; NH(3) and pyruvate from L-alanine: step 1/1. May play a role in cell wall synthesis as L-alanine is an important constituent of the peptidoglycan layer. The protein is Alanine dehydrogenase 1 (ald1) of Staphylococcus aureus (strain MRSA252).